Consider the following 136-residue polypeptide: MARVTVEDCIEQIPNRFELVLLAAQRARNLSRGASITIDRDNDKNPVVALREIADSTVDFGGLEQDLVKSLSRVPDPEPADEEVQDLIPTDQNIFGLQDVSAEEEAAAMAAESEEMTSEDIAAAIEAELGGGRPRR.

The protein belongs to the RNA polymerase subunit omega family. In terms of assembly, the RNAP catalytic core consists of 2 alpha, 1 beta, 1 beta' and 1 omega subunit. When a sigma factor is associated with the core the holoenzyme is formed, which can initiate transcription.

The catalysed reaction is RNA(n) + a ribonucleoside 5'-triphosphate = RNA(n+1) + diphosphate. Its function is as follows. Promotes RNA polymerase assembly. Latches the N- and C-terminal regions of the beta' subunit thereby facilitating its interaction with the beta and alpha subunits. The chain is DNA-directed RNA polymerase subunit omega from Acidiphilium cryptum (strain JF-5).